Here is a 641-residue protein sequence, read N- to C-terminus: Chaperone protein DnaK (641 aa).

Position 200 is a phosphothreonine; by autocatalysis (Thr200). The span at 605–623 (AAEQGGSADAASGNAQASK) shows a compositional bias: low complexity. A disordered region spans residues 605–628 (AAEQGGSADAASGNAQASKAADDV).

This sequence belongs to the heat shock protein 70 family.

Its function is as follows. Acts as a chaperone. This is Chaperone protein DnaK from Xanthomonas oryzae pv. oryzae (strain KACC10331 / KXO85).